The sequence spans 562 residues: Potassium-transporting ATPase potassium-binding subunit (562 aa).

12 helical membrane passes run 6–26, 63–83, 132–152, 175–195, 253–273, 283–303, 327–347, 356–376, 379–399, 416–436, 483–503, and 526–546; these read FLLI…LGSF, ALAI…LLMM, GLTV…FALI, LYVL…QGVL, FVQM…FGQV, LIWA…YAEL, FGIL…CGAV, ALGG…FGGV, GLYG…LMIG, MTAL…ALAL, LLLA…VLAI, and LFIG…FIPA.

Belongs to the KdpA family. The system is composed of three essential subunits: KdpA, KdpB and KdpC.

It localises to the cell inner membrane. Functionally, part of the high-affinity ATP-driven potassium transport (or Kdp) system, which catalyzes the hydrolysis of ATP coupled with the electrogenic transport of potassium into the cytoplasm. This subunit binds the periplasmic potassium ions and delivers the ions to the membrane domain of KdpB through an intramembrane tunnel. In Yersinia enterocolitica serotype O:8 / biotype 1B (strain NCTC 13174 / 8081), this protein is Potassium-transporting ATPase potassium-binding subunit.